The chain runs to 604 residues: Protein CBFA2T2 (604 aa).

The segment at 25-105 (KRVPAMPGSP…SSTSSALTNQ (81 aa)) is disordered. Phosphoserine is present on serine 33. A Glycyl lysine isopeptide (Lys-Gly) (interchain with G-Cter in SUMO2) cross-link involves residue lysine 38. Pro residues predominate over residues 46 to 59 (PTMPPLPPINPGGP). Composition is skewed to polar residues over residues 64 to 79 (FTPT…SPPT) and 88 to 105 (QRFS…LTNQ). The tract at residues 107 to 215 (LPATCGARQL…QHEHLLLNTS (109 aa)) is interaction with PRDM14. One can recognise a TAFH domain in the interval 113–208 (ARQLSKLKRF…TPSQYLAQHE (96 aa)). The interval 229-265 (VHGNGKRPSPERREENSFDRDTIAPEPPAKRVCTISP) is disordered. Residues 236 to 251 (PSPERREENSFDRDTI) show a composition bias toward basic and acidic residues. Serine 264 carries the phosphoserine modification. The segment at 331 to 377 (QDELVDHRLTEREWADEWKHLDHALNCIMEMVEKTRRSMAVLRRCQE) is nervy homology region 2 (NHR2). Residues 397–427 (RKTGTELVSRQHSPGSADSLSNDSQREFNSR) are disordered. Residues 402-419 (ELVSRQHSPGSADSLSND) show a composition bias toward polar residues. Position 409 is a phosphoserine (serine 409). The interval 435 to 484 (VEFWKKTEEAVNKVKIQAMSEVQKAVAEAEQKAFEVIATERARMEQTIAD) is nervy homology region 3 (NHR3). A Glycyl lysine isopeptide (Lys-Gly) (interchain with G-Cter in SUMO2) cross-link involves residue lysine 449. Residues 451–491 (QAMSEVQKAVAEAEQKAFEVIATERARMEQTIADVKRQAAE) are a coiled coil. Zn(2+) contacts are provided by cysteine 507, cysteine 510, cysteine 518, cysteine 521, cysteine 527, cysteine 531, histidine 539, and cysteine 543. The MYND-type zinc-finger motif lies at 507–543 (CWNCGRKASETCSGCNIARYCGSFCQHKDWERHHRLC). The interval 547–604 (LHGQSPHGQGRPLLPVGRGSSARSADCSVPSPALDKTSATTSRSSTPASVTAIDTNGL) is disordered. Serine 577 is modified (phosphoserine). The span at 583–598 (TSATTSRSSTPASVTA) shows a compositional bias: low complexity.

The protein belongs to the CBFA2T family. As to quaternary structure, homooligomer. Homotetramerization is mediated by nervy homology region 2. Can interact with RUNX1T1/CBFA2T1 and CBFA2T3/MTG16; heterotetramerization between members of the CBFA2T family is proposed. Forms a heterooligomer with the AML1-MTG8/ETO fusion protein. Interacts with PRDM14. Interacts with RBPJ, GFI1, TCF4. Interacts with TAL1 and CBFA2T3/MTG16; the heteromer with CBFA2T3/MTG16 may function in repression of TAL1. As to expression, ubiquitously expressed in fetal and adult tissues. Highly expressed in adult brain, heart, lung, kidney, lymph node, appendix, thymus, testis, uterus, small intestine, prostate and thymus.

The protein localises to the nucleus. Its function is as follows. Transcriptional corepressor which facilitates transcriptional repression via its association with DNA-binding transcription factors and recruitment of other corepressors and histone-modifying enzymes. Via association with PRDM14 is involved in regulation of embryonic stem cell (ESC) pluripotency. Involved in primordial germ cell (PCG) formation. Stabilizes PRDM14 and OCT4 on chromatin in a homooligomerization-dependent manner. Can repress the expression of MMP7 in a ZBTB33-dependent manner. May function as a complex with the chimeric protein RUNX1/AML1-CBFA2T1/MTG8 (AML1-MTG8/ETO fusion protein) which is produced in acute myeloid leukemia with the chromosomal translocation t(8;21). May thus be involved in the repression of AML1-dependent transcription and the induction of G-CSF/CSF3-dependent cell growth. May be a tumor suppressor gene candidate involved in myeloid tumors with the deletion of the 20q11 region. Through heteromerization with CBFA2T3/MTG16 may be involved in regulation of the proliferation and the differentiation of erythroid progenitors by repressing the expression of TAL1 target genes. Required for the maintenance of the secretory cell lineage in the small intestine. Can inhibit Notch signaling probably by association with RBPJ and may be involved in GFI1-mediated Paneth cell differentiation. This is Protein CBFA2T2 (CBFA2T2) from Homo sapiens (Human).